We begin with the raw amino-acid sequence, 912 residues long: Lateral signaling target protein 2 homolog (912 aa).

Residues 323-332 (NVNTSNNSDN) show a composition bias toward low complexity. Disordered stretches follow at residues 323–360 (NVNT…SSFY), 455–610 (ADSG…ESSQ), 664–745 (NSSP…ASSA), and 769–846 (GGGS…APPR). Residues 333–355 (SDSRVDDSPNDELRHESETRDNR) show a composition bias toward basic and acidic residues. The segment covering 455–468 (ADSGLGTANPSVDN) has biased composition (polar residues). The segment covering 486–505 (SSEEGEIDEYDNEEDDEDSD) has biased composition (acidic residues). The span at 530-544 (YRTHKQQHHHRHRRS) shows a compositional bias: basic residues. 2 stretches are compositionally biased toward polar residues: residues 545–556 (SGSIMSATSSRK) and 572–590 (VPSN…DTSP). Residues 591-610 (SSGNQSECSSTSSTTGESSQ) show a composition bias toward low complexity. The segment covering 682–699 (DKPKEPDPTDLFEFRASE) has biased composition (basic and acidic residues). Composition is skewed to polar residues over residues 705 to 717 (PGQN…QSIY), 735 to 745 (PGTSPIRASSA), 780 to 801 (ERSV…ATDS), and 822 to 834 (SRSS…NGTS). The segment at 850–910 (DGDAPRCMAC…VCRDCYVREV (61 aa)) adopts an FYVE-type zinc-finger fold. Cysteine 856, cysteine 859, cysteine 872, cysteine 875, cysteine 880, cysteine 883, cysteine 902, and cysteine 905 together coordinate Zn(2+).

This sequence belongs to the lst-2 family.

Negative regulator of epidermal growth factor receptor (EGFR) signaling. This is Lateral signaling target protein 2 homolog from Aedes aegypti (Yellowfever mosquito).